The chain runs to 201 residues: Holliday junction branch migration complex subunit RuvA (201 aa).

Positions 1 to 64 (MIGRLYGKII…EDAHLLFGFA (64 aa)) are domain I. Positions 65 to 143 (QKQDRTLFRE…GIAQTDFFVE (79 aa)) are domain II. Positions 144–154 (HSHETMVATYE) are flexible linker. Residues 154–201 (EIDASEEARDALLALGYKLTDAEKMIKKVHKSGATSEQLIRDALKASL) form a domain III region.

It belongs to the RuvA family. In terms of assembly, homotetramer. Forms an RuvA(8)-RuvB(12)-Holliday junction (HJ) complex. HJ DNA is sandwiched between 2 RuvA tetramers; dsDNA enters through RuvA and exits via RuvB. An RuvB hexamer assembles on each DNA strand where it exits the tetramer. Each RuvB hexamer is contacted by two RuvA subunits (via domain III) on 2 adjacent RuvB subunits; this complex drives branch migration. In the full resolvosome a probable DNA-RuvA(4)-RuvB(12)-RuvC(2) complex forms which resolves the HJ.

The protein localises to the cytoplasm. Functionally, the RuvA-RuvB-RuvC complex processes Holliday junction (HJ) DNA during genetic recombination and DNA repair, while the RuvA-RuvB complex plays an important role in the rescue of blocked DNA replication forks via replication fork reversal (RFR). RuvA specifically binds to HJ cruciform DNA, conferring on it an open structure. The RuvB hexamer acts as an ATP-dependent pump, pulling dsDNA into and through the RuvAB complex. HJ branch migration allows RuvC to scan DNA until it finds its consensus sequence, where it cleaves and resolves the cruciform DNA. The chain is Holliday junction branch migration complex subunit RuvA from Haemophilus ducreyi (strain 35000HP / ATCC 700724).